The sequence spans 321 residues: Necdin (321 aa).

A disordered region spans residues 1-96; sequence MSEQSKDLSD…QPGPAPPAPA (96 aa). Positions 20–35 are enriched in low complexity; that stretch reads SEVHSSPGVSEGVPPS. The MAGE domain maps to 98–297; it reads LVQKAHELMW…QAWPSRYREA (200 aa).

In terms of assembly, binds to the transactivation domains of E2F1 and p53. Binds also SV40 large T antigen and adenovirus E1A. Interacts with nucleobindin 1 and 2. As to expression, almost ubiquitous. Detected in fetal brain, lung, liver and kidney; in adult heart, brain, placenta, lung, liver, skeletal muscle, kidney, pancreas, spleen, thymus, prostate, testis, ovary, small intestine and colon. Not detected in peripheral blood leukocytes. In brain, restricted to post-mitotic neurons.

It is found in the perikaryon. It localises to the nucleus. Growth suppressor that facilitates the entry of the cell into cell cycle arrest. Functionally similar to the retinoblastoma protein it binds to and represses the activity of cell-cycle-promoting proteins such as SV40 large T antigen, adenovirus E1A, and the transcription factor E2F. Necdin also interacts with p53 and works in an additive manner to inhibit cell growth. Also functions as a transcription factor and directly binds to specific guanosine-rich DNA sequences. The polypeptide is Necdin (NDN) (Homo sapiens (Human)).